Consider the following 388-residue polypeptide: Putative C-&gt;U-editing enzyme APOBEC-4 (388 aa).

Positions 60 to 176 (PQTKHLTFYE…AWNREALRGL (117 aa)) constitute a CMP/dCMP-type deaminase domain. H92 contacts Zn(2+). E94 functions as the Proton donor in the catalytic mechanism. Positions 126 and 133 each coordinate Zn(2+). The interval 322–356 (KVKALRKSPSGRPVKKEEARKGSTRSQEANETNKS) is disordered.

It belongs to the cytidine and deoxycytidylate deaminase family. The cofactor is Zn(2+).

In terms of biological role, putative C to U editing enzyme whose physiological substrate is not yet known. This Rattus norvegicus (Rat) protein is Putative C-&gt;U-editing enzyme APOBEC-4 (Apobec4).